Reading from the N-terminus, the 369-residue chain is tRNA(Met) cytidine acetate ligase (369 aa).

ATP is bound by residues 7 to 20 (VAEFNPFHNGHKYL), Gly-96, Asn-152, and Arg-175.

It belongs to the TmcAL family.

The protein resides in the cytoplasm. It carries out the reaction cytidine(34) in elongator tRNA(Met) + acetate + ATP = N(4)-acetylcytidine(34) in elongator tRNA(Met) + AMP + diphosphate. Its function is as follows. Catalyzes the formation of N(4)-acetylcytidine (ac(4)C) at the wobble position of elongator tRNA(Met), using acetate and ATP as substrates. First activates an acetate ion to form acetyladenylate (Ac-AMP) and then transfers the acetyl group to tRNA to form ac(4)C34. This is tRNA(Met) cytidine acetate ligase from Streptococcus agalactiae serotype III (strain NEM316).